A 234-amino-acid chain; its full sequence is LexA repressor (234 aa).

Residues 1–11 (MNEATSHEGPK) are compositionally biased toward basic and acidic residues. The disordered stretch occupies residues 1-34 (MNEATSHEGPKRSLPGRPPGIRADSSGLTDRQRR). The segment at residues 52-72 (MREIGQAVGLSSTSSVAHQLM) is a DNA-binding region (H-T-H motif). The span at 83 to 94 (DPHRPRAYEVRG) shows a compositional bias: basic and acidic residues. Positions 83 to 109 (DPHRPRAYEVRGSDQSSSVQPTDTAGK) are disordered. Polar residues predominate over residues 95–105 (SDQSSSVQPTD). Active-site for autocatalytic cleavage activity residues include Ser158 and Lys195.

It belongs to the peptidase S24 family. In terms of assembly, homodimer.

It carries out the reaction Hydrolysis of Ala-|-Gly bond in repressor LexA.. Functionally, represses a number of genes involved in the response to DNA damage (SOS response), including recA and lexA. In the presence of single-stranded DNA, RecA interacts with LexA causing an autocatalytic cleavage which disrupts the DNA-binding part of LexA, leading to derepression of the SOS regulon and eventually DNA repair. This is LexA repressor from Streptomyces avermitilis (strain ATCC 31267 / DSM 46492 / JCM 5070 / NBRC 14893 / NCIMB 12804 / NRRL 8165 / MA-4680).